The primary structure comprises 236 residues: Small ribosomal subunit protein mS41 (236 aa).

Belongs to the mitochondrion-specific ribosomal protein mS41 family. Component of the mitochondrial small ribosomal subunit (mt-SSU). Mature N.crassa 74S mitochondrial ribosomes consist of a small (37S) and a large (54S) subunit. The 37S small subunit contains a 16S ribosomal RNA (16S mt-rRNA) and 32 different proteins. The 54S large subunit contains a 23S rRNA (23S mt-rRNA) and 42 different proteins.

The protein localises to the mitochondrion. In terms of biological role, component of the mitochondrial ribosome (mitoribosome), a dedicated translation machinery responsible for the synthesis of mitochondrial genome-encoded proteins, including at least some of the essential transmembrane subunits of the mitochondrial respiratory chain. The mitoribosomes are attached to the mitochondrial inner membrane and translation products are cotranslationally integrated into the membrane. This Neurospora crassa (strain ATCC 24698 / 74-OR23-1A / CBS 708.71 / DSM 1257 / FGSC 987) protein is Small ribosomal subunit protein mS41 (fyv4).